A 293-amino-acid polypeptide reads, in one-letter code: tRNA pseudouridine synthase B (293 aa).

The active-site Nucleophile is the aspartate 40.

This sequence belongs to the pseudouridine synthase TruB family. Type 1 subfamily.

It catalyses the reaction uridine(55) in tRNA = pseudouridine(55) in tRNA. Its function is as follows. Responsible for synthesis of pseudouridine from uracil-55 in the psi GC loop of transfer RNAs. This is tRNA pseudouridine synthase B from Mycolicibacterium paratuberculosis (strain ATCC BAA-968 / K-10) (Mycobacterium paratuberculosis).